The chain runs to 488 residues: Thiamine transporter 2 (488 aa).

Residues 1 to 8 (MDSSCRTP) are Cytoplasmic-facing. A helical transmembrane segment spans residues 9 to 29 (PSNSWVYPTVILCLFGFFSMF). Residues 30 to 54 (RPSEAFLIPFLSEPSKNLTSPEMTN) are Extracellular-facing. N-linked (GlcNAc...) asparagine glycosylation occurs at asparagine 46. A helical membrane pass occupies residues 55-75 (EILPVWTYSYLATLPPVFVLT). Topologically, residues 76 to 82 (DYLRYKP) are cytoplasmic. The chain crosses the membrane as a helical span at residues 83–103 (VIMLHVVAFATSYLFLLFGQG). Residues 104-111 (VMLMQTAE) are Extracellular-facing. Residues 112 to 132 (FFFGVVSATEIAYFAYIYSMV) traverse the membrane as a helical segment. Over 133-145 (SPEHYQKVSSYCR) the chain is Cytoplasmic. The helical transmembrane segment at 146-166 (SITLVAYTAGSVLAQLLVSLT) threads the bilayer. At 167–172 (NLPYSS) the chain is on the extracellular side. The helical transmembrane segment at 173–193 (LFYISLACVSVAFFFSLFLPM) threads the bilayer. Residues 194–276 (PKKSMFFHAK…YSSKHLVYWS (83 aa)) are Cytoplasmic-facing. The helical transmembrane segment at 277 to 297 (LWWAFATAGYNQILNYVQVLW) threads the bilayer. Topologically, residues 298–310 (EHKAPSQDSSIYN) are extracellular. The chain crosses the membrane as a helical span at residues 311-331 (GAVEAIATFGGALASFSVGYL). Residues 332–335 (KVNW) are Cytoplasmic-facing. Residues 336–356 (DLLGELGLAVFSAVIAGSLFL) form a helical membrane-spanning segment. Over 357–369 (MNYSRSIWVCYAG) the chain is Extracellular. A glycan (N-linked (GlcNAc...) asparagine) is linked at asparagine 358. Residues 370 to 390 (YLLVKSSYSFLITIAVFQIAV) form a helical membrane-spanning segment. Topologically, residues 391 to 399 (NLSLERYAL) are cytoplasmic. The helical transmembrane segment at 400-420 (VFGIDTFIALVIQTIMTMIVV) threads the bilayer. At 421–428 (DQRGLQLP) the chain is on the extracellular side. A helical membrane pass occupies residues 429–449 (VTTQFLVYGSYFAVIAGVFLM). Topologically, residues 450-488 (RSIYILCSAKCRKEVQNLATTRSPNEPHPQEPSNVSTKF) are cytoplasmic. Positions 469–488 (TTRSPNEPHPQEPSNVSTKF) are disordered.

Belongs to the reduced folate carrier (RFC) transporter (TC 2.A.48) family. As to expression, high expression in kidney, brain, lung and small intestine. Detected in pancreatic acinar cells (at protein level). Also expressed strongly in pancreatic islet cells.

The protein localises to the membrane. The enzyme catalyses thiamine(out) + H(+)(in) = thiamine(in) + H(+)(out). Its function is as follows. High-affinity transporter for the intake of thiamine. Unlike the human ortholog, lacks H(+)-dependent pyridoxine transport activity due to an absence of seven critical amino-acids required for pyridoxine transport. This chain is Thiamine transporter 2 (Slc19a3), found in Mus musculus (Mouse).